Consider the following 390-residue polypeptide: tRNA(Met) cytidine acetate ligase (390 aa).

ATP contacts are provided by residues 7-20 (VVEY…HKLH), Gly101, Asn162, and Arg187.

The protein belongs to the TmcAL family.

It is found in the cytoplasm. The catalysed reaction is cytidine(34) in elongator tRNA(Met) + acetate + ATP = N(4)-acetylcytidine(34) in elongator tRNA(Met) + AMP + diphosphate. Its function is as follows. Catalyzes the formation of N(4)-acetylcytidine (ac(4)C) at the wobble position of elongator tRNA(Met), using acetate and ATP as substrates. First activates an acetate ion to form acetyladenylate (Ac-AMP) and then transfers the acetyl group to tRNA to form ac(4)C34. The protein is tRNA(Met) cytidine acetate ligase of Listeria monocytogenes serotype 4a (strain HCC23).